The sequence spans 368 residues: Zinc finger protein 24 (368 aa).

K22 participates in a covalent cross-link: Glycyl lysine isopeptide (Lys-Gly) (interchain with G-Cter in SUMO2). K27 participates in a covalent cross-link: Glycyl lysine isopeptide (Lys-Gly) (interchain with G-Cter in SUMO1); alternate. K27 is covalently cross-linked (Glycyl lysine isopeptide (Lys-Gly) (interchain with G-Cter in SUMO2); alternate). The region spanning 52 to 134 (RQRFRQFGYQ…TVLEDLESEL (83 aa)) is the SCAN box domain. Phosphoserine is present on residues S132 and S142. Residues K147, K177, and K236 each participate in a glycyl lysine isopeptide (Lys-Gly) (interchain with G-Cter in SUMO2) cross-link. The C2H2-type 1 zinc finger occupies 251–273 (HICDECGKHFSQGSALILHQRIH). Positions 251-301 (HICDECGKHFSQGSALILHQRIHSGEKPYGCVECGKAFSRSSILVQHQRVH) are necessary and sufficient for nuclear localization. S274 carries the post-translational modification Phosphoserine. Residues K277 and K286 each participate in a glycyl lysine isopeptide (Lys-Gly) (interchain with G-Cter in SUMO2) cross-link. C2H2-type zinc fingers lie at residues 279–301 (YGCV…QRVH), 307–329 (YKCL…QRIH), and 335–357 (YECV…XXRH). S292 carries the phosphoserine modification. Y335 bears the Phosphotyrosine mark. Residues K361 and K367 each participate in a glycyl lysine isopeptide (Lys-Gly) (interchain with G-Cter in SUMO2) cross-link.

This sequence belongs to the krueppel C2H2-type zinc-finger protein family. Sumoylated.

The protein localises to the nucleus. Its function is as follows. Transcription factor required for myelination of differentiated oligodendrocytes. Required for the conversion of oligodendrocytes from the premyelinating to the myelinating state. In the developing central nervous system (CNS), involved in the maintenance in the progenitor stage by promoting the cell cycle. Specifically binds to the 5'-TCAT-3' DNA sequence. Has transcription repressor activity in vitro. This chain is Zinc finger protein 24 (ZNF24), found in Pan troglodytes (Chimpanzee).